Reading from the N-terminus, the 451-residue chain is Glucose-6-phosphate isomerase (451 aa).

The active-site Proton donor is Glu291. Active-site residues include His312 and Lys426.

The protein belongs to the GPI family.

The protein localises to the cytoplasm. It carries out the reaction alpha-D-glucose 6-phosphate = beta-D-fructose 6-phosphate. The protein operates within carbohydrate biosynthesis; gluconeogenesis. Its pathway is carbohydrate degradation; glycolysis; D-glyceraldehyde 3-phosphate and glycerone phosphate from D-glucose: step 2/4. Its function is as follows. Catalyzes the reversible isomerization of glucose-6-phosphate to fructose-6-phosphate. The protein is Glucose-6-phosphate isomerase of Caldanaerobacter subterraneus subsp. tengcongensis (strain DSM 15242 / JCM 11007 / NBRC 100824 / MB4) (Thermoanaerobacter tengcongensis).